The primary structure comprises 110 residues: PCNA-associated factor (110 aa).

K15 is covalently cross-linked (Glycyl lysine isopeptide (Lys-Gly) (interchain with G-Cter in ubiquitin)). The short motif at 23 to 34 is the D-box element; sequence RKVLGSSTFVTN. Position 24 is an N6-acetyllysine; alternate (K24). A Glycyl lysine isopeptide (Lys-Gly) (interchain with G-Cter in ubiquitin); alternate cross-link involves residue K24. 2 positions are modified to phosphoserine: S28 and S71. Positions 28 to 39 are enriched in low complexity; that stretch reads SSTFVTNSSSSS. A disordered region spans residues 28-110; it reads SSTFVTNSSS…QPDHRDDENE (83 aa). Positions 61 to 71 match the PIP-box motif; it reads QKGIGEFFRLS. The segment covering 71–80 has biased composition (basic and acidic residues); sequence SPKESKKENQ. The short motif at 77-79 is the KEN box element; that stretch reads KEN. The Initiation motif motif lies at 84 to 96; that stretch reads EAGTSGLGKAKRK.

As to quaternary structure, interacts (when monoubiquitinated at Lys-15 and Lys-24) with PCNA. Interacts with isoform 2/p33ING1b of ING1. Interacts with BRCA1. Monoubiquitinated at Lys-15 and Lys-24 during normal S phase, promoting its association with PCNA. Also diubiquitinated at these 2 sites. Following DNA damage, monoubiquitin chains at Lys-15 and Lys-24 are probably extended, leading to disrupt the interaction with PCNA. Polyubiquitinated by the APC/C complex at the mitotic exit, leading to its degradation by the proteasome.

The protein resides in the nucleus. The protein localises to the cytoplasm. It is found in the perinuclear region. PCNA-binding protein that acts as a regulator of DNA repair during DNA replication. Following DNA damage, the interaction with PCNA is disrupted, facilitating the interaction between monoubiquitinated PCNA and the translesion DNA synthesis DNA polymerase eta (POLH) at stalled replisomes, facilitating the bypass of replication-fork-blocking lesions. Also acts as a regulator of centrosome number. The protein is PCNA-associated factor of Mus musculus (Mouse).